A 304-amino-acid chain; its full sequence is tRNA U34 carboxymethyltransferase (304 aa).

Carboxy-S-adenosyl-L-methionine-binding positions include lysine 73, tryptophan 87, lysine 92, glycine 111, 133–135 (DPS), 160–161 (VE), tyrosine 180, and arginine 295.

The protein belongs to the class I-like SAM-binding methyltransferase superfamily. CmoB family. As to quaternary structure, homotetramer.

It carries out the reaction carboxy-S-adenosyl-L-methionine + 5-hydroxyuridine(34) in tRNA = 5-carboxymethoxyuridine(34) in tRNA + S-adenosyl-L-homocysteine + H(+). In terms of biological role, catalyzes carboxymethyl transfer from carboxy-S-adenosyl-L-methionine (Cx-SAM) to 5-hydroxyuridine (ho5U) to form 5-carboxymethoxyuridine (cmo5U) at position 34 in tRNAs. The protein is tRNA U34 carboxymethyltransferase of Aliarcobacter butzleri (strain RM4018) (Arcobacter butzleri).